The chain runs to 3661 residues: Serine/threonine-protein kinase SMG1 (3661 aa).

Low complexity predominate over residues 1-11 (MSRRAPGSRLS). Disordered regions lie at residues 1–101 (MSRR…TYGR) and 116–144 (PEFTSVQHGSRALATKDMRKSQERSMSYS). The tract at residues 1–1977 (MSRRAPGSRL…GVLLQQHMYV (1977 aa)) is interaction with SMG8 and SMG9. The segment covering 26–35 (NDWQPRTDSA) has biased composition (polar residues). 2 stretches are compositionally biased toward basic and acidic residues: residues 69–86 (QRHDDTRVHADIQNDEKG) and 129–138 (ATKDMRKSQE). The residue at position 173 (lysine 173) is an N6-acetyllysine. Residues 1154 to 1165 (RNSASPKHSLNG) show a composition bias toward polar residues. The disordered stretch occupies residues 1154–1175 (RNSASPKHSLNGESRKTVLSKP). In terms of domain architecture, FAT spans 1283–1866 (RELQKSIEVQ…LYPAIVGTIS (584 aa)). Residues 1817–1852 (APWRGIIPQLFSRLNHPEVYVRQSICNLLCRVAQDS) form an HEAT repeat. The segment at 1898 to 1919 (ECEGGSPPASQDSNKDEPKSGL) is disordered. In terms of domain architecture, PI3K/PI4K catalytic spans 2124–2463 (VGGTITILPT…MEREITRSLF (340 aa)). Positions 2130 to 2136 (ILPTKTK) are G-loop. The segment at 2332 to 2340 (GLGDRHLDN) is catalytic loop. The activation loop stretch occupies residues 2352 to 2376 (HIDYNVCFEKGKSLRVPEKVPFRMT). Threonine 3550 is modified (phosphothreonine). A phosphoserine mark is found at serine 3556 and serine 3570. A compositionally biased stretch (polar residues) spans 3568–3579 (ATSADTPPSTVP). The tract at residues 3568–3591 (ATSADTPPSTVPGTGKSVACSPKK) is disordered. A phosphothreonine mark is found at threonine 3573 and threonine 3577. The FATC domain occupies 3629 to 3661 (RRMSVAEQVDYVIKEATNLDNLAQLYEGWTAWV).

The protein belongs to the PI3/PI4-kinase family. In terms of assembly, component of the SMG1C complex composed of SMG1, SMG8 and SMG9; the recruitment of SMG8 to SMG1 N-terminus induces a large conformational change in the SMG1 C-terminal head domain containing the catalytic domain. Component of the transient SURF (SMG1-UPF1-eRF1-eRF3) complex. Part of a complex composed of SMG1, DHX34 and UPF1; within the complex DHX34 acts as a scaffolding protein to facilitate SMG1 phosphorylation of UPF1. Interacts with PRKCI. Interacts with TELO2 and TTI1. Interacts with RUVBL1 and RUVBL2. Interacts with UPF2. Interacts with DHX34 (via C-terminus); the interaction is RNA-independent. It depends on Mn(2+) as a cofactor. Post-translationally, autophosphorylated. Widely expressed, with highest level in heart and skeletal muscle. Expressed in placenta, brain, lung and spleen, but not in liver.

It localises to the nucleus. It is found in the cytoplasm. The enzyme catalyses L-seryl-[protein] + ATP = O-phospho-L-seryl-[protein] + ADP + H(+). It carries out the reaction L-threonyl-[protein] + ATP = O-phospho-L-threonyl-[protein] + ADP + H(+). Its activity is regulated as follows. Inhibited by caffeine, LY294002 and wortmannin. In terms of biological role, serine/threonine protein kinase involved in both mRNA surveillance and genotoxic stress response pathways. Recognizes the substrate consensus sequence [ST]-Q. Plays a central role in nonsense-mediated decay (NMD) of mRNAs containing premature stop codons by phosphorylating UPF1/RENT1. Recruited by release factors to stalled ribosomes together with SMG8 and SMG9 (forming the SMG1C protein kinase complex), and UPF1 to form the transient SURF (SMG1-UPF1-eRF1-eRF3) complex. In EJC-dependent NMD, the SURF complex associates with the exon junction complex (EJC) through UPF2 and allows the formation of an UPF1-UPF2-UPF3 surveillance complex which is believed to activate NMD. Also acts as a genotoxic stress-activated protein kinase that displays some functional overlap with ATM. Can phosphorylate p53/TP53 and is required for optimal p53/TP53 activation after cellular exposure to genotoxic stress. Its depletion leads to spontaneous DNA damage and increased sensitivity to ionizing radiation (IR). May activate PRKCI but not PRKCZ. This is Serine/threonine-protein kinase SMG1 from Homo sapiens (Human).